The primary structure comprises 76 residues: Omega-conotoxin-like Ai6.3 (76 aa).

The first 22 residues, 1 to 22, serve as a signal peptide directing secretion; that stretch reads MKLTCLMIVAVLFLTAWTFVTA. Residues 23 to 50 constitute a propeptide that is removed on maturation; sequence VPDSSNALENLYLKAHHEMNNPEDSELN. Cystine bridges form between C53–C67, C60–C71, and C66–C75.

This sequence belongs to the conotoxin O1 superfamily. As to expression, expressed by the venom duct.

It localises to the secreted. In terms of biological role, omega-conotoxins act at presynaptic membranes, they bind and block voltage-gated calcium channels (Cav). The chain is Omega-conotoxin-like Ai6.3 from Conus ammiralis (Admiral cone).